Here is a 780-residue protein sequence, read N- to C-terminus: MAPYRPEFSAAEQSRIDAEFSRLARNKSVYLDHAGTTLYAENQVTAAAEQLQRNVICNPHTCRLTGDFVDQVRFKILEFFNTTAEDYHVIFTANATAALSLVAENFDFGSTGDFHFCQENHTSVLGMRERVRANGIYMLKEKEISGGELKKNGTVHKVSGKTGNSLLTFSAQCNFSGYKIPLDTIEKIQIDGLSKPGKQLWGSLGENKENTHNDYYICLDAASFVATSPLDLKKYRPDYVCLSFYKIFGYPTGVGALLVSRRGADVFQKRRFFGGGTINYAYPHAMDYQLRETFHQRYEDGTLPFLAIVGLLEGFRTLERLVPKTDEFSTMERISRHVFGLAKYLEDQLRQLQHPNGEPLVELYNKVGYQDKSRQGGIVAFNVRTESGSFVGFGEIACVAALHGILLRTGCFCNIGACQYYLNLDEDAMDTIYKRAGRICGDYFDLVDGQPTGAVRVSFGYMTTFQDVEQLLQMLRSSYLATKPLQRIQFIEEQAEQLPPLLKERVQLLRPKLLQMAIYPVKSCAAFKIELEGSWPLTDQGLRYDREWMIVDMNGMALTQKRCTELCLIRPVIKVDQLELQFGDNSHFSVPLSLEDQAADSAKCVSKVCRQPVEGLDCGDGVAQWLSENLGLEGLRLLRQSGQRNSSKDQQKLSLVNQAQFLLLNKSSVRSLQFEEPLDETVDRFRANIIIDTGSAFEELTYKALSIGGIQFQVEGPCQRCDMICINQRTGERSPETLTTISRLQKGRMRFGIYITRIPQDTKELEAKEHMTCGDVVLVE.

Lysine 246 carries the N6-(pyridoxal phosphate)lysine modification. Residue cysteine 413 is part of the active site. An MOSC domain is found at 635 to 780 (LRLLRQSGQR…MTCGDVVLVE (146 aa)). Phosphoserine is present on serine 734.

This sequence belongs to the class-V pyridoxal-phosphate-dependent aminotransferase family. MOCOS subfamily. Pyridoxal 5'-phosphate serves as cofactor.

It carries out the reaction Mo-molybdopterin + L-cysteine + AH2 = thio-Mo-molybdopterin + L-alanine + A + H2O. Sulfurates the molybdenum cofactor. Sulfation of molybdenum is essential for xanthine dehydrogenase (XDH) and aldehyde oxidase (ADO) enzymes in which molybdenum cofactor is liganded by 1 oxygen and 1 sulfur atom in active form. This is Molybdenum cofactor sulfurase from Drosophila yakuba (Fruit fly).